A 566-amino-acid chain; its full sequence is Cytochrome c oxidase subunit 1 (566 aa).

Helical transmembrane passes span 29 to 49, 97 to 117, 141 to 161, 189 to 209, 227 to 247, 278 to 298, and 310 to 330; these read IGVL…AFTV, VMIT…ALFG, LSYW…FAPG, LAIF…INMI, LFAW…PVLA, ILWF…FGIV, and IFGY…GFVV. A Fe(II)-heme a-binding site is contributed by H102. Cu cation contacts are provided by H284 and Y288. A cross-link (1'-histidyl-3'-tyrosine (His-Tyr)) is located at residues 284 to 288; sequence HPEVY. The Cu cation site is built by H333 and H334. 2 helical membrane passes run 348 to 368 and 381 to 401; these read FMMA…SWIA and MLWA…GIVL. Residue H419 coordinates heme a3. 3 consecutive transmembrane segments (helical) span residues 420–440, 455–475, and 499–519; these read FHYV…YFWI, LHFW…HFLG, and LGAF…FYTL. H421 serves as a coordination point for Fe(II)-heme a. A disordered region spans residues 543 to 566; it reads TSPPPEHTFEQLPKREDWERAPAH. Residues 549 to 566 are compositionally biased toward basic and acidic residues; that stretch reads HTFEQLPKREDWERAPAH.

The protein belongs to the heme-copper respiratory oxidase family. Cu(2+) serves as cofactor. Heme is required as a cofactor.

The protein localises to the cell membrane. The catalysed reaction is 4 Fe(II)-[cytochrome c] + O2 + 8 H(+)(in) = 4 Fe(III)-[cytochrome c] + 2 H2O + 4 H(+)(out). Its pathway is energy metabolism; oxidative phosphorylation. Its function is as follows. Cytochrome c oxidase is the component of the respiratory chain that catalyzes the reduction of oxygen to water. Subunits 1-3 form the functional core of the enzyme complex. Co I is the catalytic subunit of the enzyme. Electrons originating in cytochrome c are transferred via the copper A center of subunit 2 and heme a of subunit 1 to the bimetallic center formed by heme a3 and copper B. This cytochrome c oxidase shows proton pump activity across the membrane in addition to the electron transfer. In Cereibacter sphaeroides (Rhodobacter sphaeroides), this protein is Cytochrome c oxidase subunit 1 (ctaD).